Here is a 716-residue protein sequence, read N- to C-terminus: 1,4-alpha-glucan branching enzyme GlgB (716 aa).

The active-site Nucleophile is Asp399. Residue Glu452 is the Proton donor of the active site.

Belongs to the glycosyl hydrolase 13 family. GlgB subfamily. In terms of assembly, monomer.

It catalyses the reaction Transfers a segment of a (1-&gt;4)-alpha-D-glucan chain to a primary hydroxy group in a similar glucan chain.. It functions in the pathway glycan biosynthesis; glycogen biosynthesis. In terms of biological role, catalyzes the formation of the alpha-1,6-glucosidic linkages in glycogen by scission of a 1,4-alpha-linked oligosaccharide from growing alpha-1,4-glucan chains and the subsequent attachment of the oligosaccharide to the alpha-1,6 position. The polypeptide is 1,4-alpha-glucan branching enzyme GlgB (Rhodopseudomonas palustris (strain ATCC BAA-98 / CGA009)).